The chain runs to 309 residues: Tumor necrosis factor ligand superfamily member 9 (309 aa).

Residues 1–16 show a composition bias toward basic and acidic residues; the sequence is MDQHTLDVEDTADARH. The segment at 1–20 is disordered; sequence MDQHTLDVEDTADARHPAGT. Residues 1–82 lie on the Cytoplasmic side of the membrane; sequence MDQHTLDVED…ALNFCSRHPK (82 aa). Residues 83–103 traverse the membrane as a helical; Signal-anchor for type II membrane protein segment; that stretch reads LYGLVALVLLLLIAACVPIFT. Topologically, residues 104–309 are extracellular; that stretch reads RTEPRPALTI…FLVKPDNPWE (206 aa). N-linked (GlcNAc...) asparagine glycans are attached at residues asparagine 139, asparagine 161, and asparagine 293. One can recognise a THD domain in the interval 147 to 302; it reads VFAKLLAKNQ…NTTSFGLFLV (156 aa).

It belongs to the tumor necrosis factor family. As to quaternary structure, homotrimer.

It is found in the membrane. Its function is as follows. Cytokine that binds to TNFRSF9. Induces the proliferation of activated peripheral blood T-cells. May have a role in activation-induced cell death (AICD). May play a role in cognate interactions between T-cells and B-cells/macrophages. In Mus musculus (Mouse), this protein is Tumor necrosis factor ligand superfamily member 9 (Tnfsf9).